Consider the following 314-residue polypeptide: tRNA-cytidine(32) 2-sulfurtransferase (314 aa).

A PP-loop motif motif is present at residues 39–44; sequence SGGKDS. 3 residues coordinate [4Fe-4S] cluster: C114, C117, and C205.

The protein belongs to the TtcA family. Homodimer. It depends on Mg(2+) as a cofactor. The cofactor is [4Fe-4S] cluster.

It is found in the cytoplasm. The enzyme catalyses cytidine(32) in tRNA + S-sulfanyl-L-cysteinyl-[cysteine desulfurase] + AH2 + ATP = 2-thiocytidine(32) in tRNA + L-cysteinyl-[cysteine desulfurase] + A + AMP + diphosphate + H(+). It participates in tRNA modification. In terms of biological role, catalyzes the ATP-dependent 2-thiolation of cytidine in position 32 of tRNA, to form 2-thiocytidine (s(2)C32). The sulfur atoms are provided by the cysteine/cysteine desulfurase (IscS) system. The chain is tRNA-cytidine(32) 2-sulfurtransferase from Cupriavidus necator (strain ATCC 17699 / DSM 428 / KCTC 22496 / NCIMB 10442 / H16 / Stanier 337) (Ralstonia eutropha).